Reading from the N-terminus, the 144-residue chain is Large ribosomal subunit protein uL15 (144 aa).

A disordered region spans residues 1–58 (MKLNNLSPAPGSKHAEKRVGRGIGSGLGKTGGRGHKGQKSRSGGSVKPGFEGGQMPLQ). The segment covering 21 to 31 (RGIGSGLGKTG) has biased composition (gly residues).

Belongs to the universal ribosomal protein uL15 family. Part of the 50S ribosomal subunit.

Its function is as follows. Binds to the 23S rRNA. This Chromohalobacter salexigens (strain ATCC BAA-138 / DSM 3043 / CIP 106854 / NCIMB 13768 / 1H11) protein is Large ribosomal subunit protein uL15.